The sequence spans 419 residues: Phospho-N-acetylmuramoyl-pentapeptide-transferase (419 aa).

A run of 10 helical transmembrane segments spans residues 22–42, 72–92, 99–119, 135–155, 208–228, 238–258, 278–298, 303–323, 328–348, and 396–416; these read YVSF…TVIG, TPTM…LLLA, ILLM…DDYI, IIGQ…NPAV, VLFG…FISN, GLAT…AYVS, LTIF…YNAY, FMGD…ALII, LLPI…IQVF, and KITV…IATL.

It belongs to the glycosyltransferase 4 family. MraY subfamily. Mg(2+) is required as a cofactor.

It localises to the cell inner membrane. It carries out the reaction UDP-N-acetyl-alpha-D-muramoyl-L-alanyl-gamma-D-glutamyl-meso-2,6-diaminopimeloyl-D-alanyl-D-alanine + di-trans,octa-cis-undecaprenyl phosphate = di-trans,octa-cis-undecaprenyl diphospho-N-acetyl-alpha-D-muramoyl-L-alanyl-D-glutamyl-meso-2,6-diaminopimeloyl-D-alanyl-D-alanine + UMP. The protein operates within cell wall biogenesis; peptidoglycan biosynthesis. Its function is as follows. Catalyzes the initial step of the lipid cycle reactions in the biosynthesis of the cell wall peptidoglycan: transfers peptidoglycan precursor phospho-MurNAc-pentapeptide from UDP-MurNAc-pentapeptide onto the lipid carrier undecaprenyl phosphate, yielding undecaprenyl-pyrophosphoryl-MurNAc-pentapeptide, known as lipid I. The chain is Phospho-N-acetylmuramoyl-pentapeptide-transferase from Porphyromonas gingivalis (strain ATCC BAA-308 / W83).